A 126-amino-acid chain; its full sequence is Histone H2B type 2-E (126 aa).

Low complexity predominate over residues 1-12 (MPEPAKSAPAPK). The interval 1 to 35 (MPEPAKSAPAPKKGSKKAVTKAQKKDGKKRKRSRK) is disordered. Residue proline 2 is modified to N-acetylproline. Position 3 is an ADP-ribosyl glutamic acid (glutamate 3). At lysine 6 the chain carries N6-(2-hydroxyisobutyryl)lysine; alternate. Position 6 is an N6-(beta-hydroxybutyryl)lysine; alternate (lysine 6). N6-acetyllysine; alternate is present on lysine 6. Lysine 6 carries the N6-butyryllysine; alternate modification. Lysine 6 is subject to N6-crotonyllysine; alternate. Residue lysine 6 is modified to N6-lactoyllysine; alternate. Lysine 6 participates in a covalent cross-link: Glycyl lysine isopeptide (Lys-Gly) (interchain with G-Cter in SUMO2); alternate. ADP-ribosylserine is present on serine 7. Lysine 12 bears the N6-(beta-hydroxybutyryl)lysine; alternate mark. N6-acetyllysine; alternate is present on residues lysine 12 and lysine 13. An N6-crotonyllysine; alternate mark is found at lysine 12 and lysine 13. Position 12 is an N6-lactoyllysine; alternate (lysine 12). The residue at position 13 (lysine 13) is an N6-(2-hydroxyisobutyryl)lysine; alternate. Serine 15 carries the post-translational modification Phosphoserine; by STK4/MST1. N6-acetyllysine; alternate is present on residues lysine 16, lysine 17, lysine 21, and lysine 24. N6-crotonyllysine; alternate occurs at positions 16, 17, 21, and 24. N6-lactoyllysine; alternate is present on residues lysine 16, lysine 17, lysine 21, and lysine 24. N6-(beta-hydroxybutyryl)lysine; alternate occurs at positions 17 and 21. Lysine 17 is modified (N6-glutaryllysine; alternate). Lysine 21 and lysine 24 each carry N6-(2-hydroxyisobutyryl)lysine; alternate. Residue lysine 21 is modified to N6-butyryllysine; alternate. Residue lysine 21 forms a Glycyl lysine isopeptide (Lys-Gly) (interchain with G-Cter in SUMO2); alternate linkage. The residue at position 25 (lysine 25) is an N6-(2-hydroxyisobutyryl)lysine. An N6-(2-hydroxyisobutyryl)lysine; alternate modification is found at lysine 35. At lysine 35 the chain carries N6-(beta-hydroxybutyryl)lysine; alternate. At lysine 35 the chain carries N6-crotonyllysine; alternate. The residue at position 35 (lysine 35) is an N6-glutaryllysine; alternate. Lysine 35 carries the N6-succinyllysine; alternate modification. A Glycyl lysine isopeptide (Lys-Gly) (interchain with G-Cter in ubiquitin); alternate cross-link involves residue lysine 35. Glutamate 36 carries the polyADP-ribosyl glutamic acid modification. Position 37 is a phosphoserine; by AMPK (serine 37). Residues lysine 44, lysine 47, and lysine 58 each carry the N6-(2-hydroxyisobutyryl)lysine; alternate modification. N6-lactoyllysine; alternate is present on lysine 44. N6-glutaryllysine; alternate occurs at positions 44 and 47. Lysine 47 is modified (N6-methyllysine; alternate). At lysine 58 the chain carries N6,N6-dimethyllysine; alternate. At arginine 80 the chain carries Dimethylated arginine. An N6-(2-hydroxyisobutyryl)lysine; alternate modification is found at lysine 86. The residue at position 86 (lysine 86) is an N6-(beta-hydroxybutyryl)lysine; alternate. Lysine 86 bears the N6-acetyllysine; alternate mark. Lysine 86 is subject to N6-lactoyllysine; alternate. Residue lysine 86 is modified to N6,N6,N6-trimethyllysine; alternate. Omega-N-methylarginine occurs at positions 87 and 93. Lysine 109 is subject to N6-(2-hydroxyisobutyryl)lysine; alternate. Lysine 109 bears the N6-lactoyllysine; alternate mark. Lysine 109 is subject to N6-glutaryllysine; alternate. Lysine 109 bears the N6-methyllysine; alternate mark. Serine 113 carries O-linked (GlcNAc) serine glycosylation. Residue threonine 116 is modified to Phosphothreonine. Residues lysine 117 and lysine 121 each carry the N6-(2-hydroxyisobutyryl)lysine; alternate modification. Lysine 117 and lysine 121 each carry N6-(beta-hydroxybutyryl)lysine; alternate. N6-lactoyllysine; alternate is present on residues lysine 117 and lysine 121. An N6-glutaryllysine; alternate mark is found at lysine 117 and lysine 121. 2 positions are modified to N6-succinyllysine; alternate: lysine 117 and lysine 121. Lysine 117 is subject to N6-malonyllysine; alternate. Lysine 117 carries the N6-methylated lysine; alternate modification. Lysine 121 participates in a covalent cross-link: Glycyl lysine isopeptide (Lys-Gly) (interchain with G-Cter in ubiquitin); alternate.

It belongs to the histone H2B family. In terms of assembly, the nucleosome is a histone octamer containing two molecules each of H2A, H2B, H3 and H4 assembled in one H3-H4 heterotetramer and two H2A-H2B heterodimers. The octamer wraps approximately 147 bp of DNA. In terms of processing, monoubiquitination at Lys-35 (H2BK34Ub) by the MSL1/MSL2 dimer is required for histone H3 'Lys-4' (H3K4me) and 'Lys-79' (H3K79me) methylation and transcription activation at specific gene loci, such as HOXA9 and MEIS1 loci. Similarly, monoubiquitination at Lys-121 (H2BK120Ub) by the RNF20/40 complex gives a specific tag for epigenetic transcriptional activation and is also prerequisite for histone H3 'Lys-4' and 'Lys-79' methylation. It also functions cooperatively with the FACT dimer to stimulate elongation by RNA polymerase II. H2BK120Ub also acts as a regulator of mRNA splicing: deubiquitination by USP49 is required for efficient cotranscriptional splicing of a large set of exons. Phosphorylation at Ser-37 (H2BS36ph) by AMPK in response to stress promotes transcription. Phosphorylated on Ser-15 (H2BS14ph) by STK4/MST1 during apoptosis; which facilitates apoptotic chromatin condensation. Also phosphorylated on Ser-15 in response to DNA double strand breaks (DSBs), and in correlation with somatic hypermutation and immunoglobulin class-switch recombination. Post-translationally, glcNAcylation at Ser-113 promotes monoubiquitination of Lys-121. It fluctuates in response to extracellular glucose, and associates with transcribed genes. In terms of processing, ADP-ribosylated by PARP1 or PARP2 on Ser-7 (H2BS6ADPr) in response to DNA damage. H2BS6ADPr promotes recruitment of CHD1L. Mono-ADP-ribosylated on Glu-3 (H2BE2ADPr) by PARP3 in response to single-strand breaks. Poly ADP-ribosylation on Glu-36 (H2BE35ADPr) by PARP1 regulates adipogenesis: it inhibits phosphorylation at Ser-37 (H2BS36ph), thereby blocking expression of pro-adipogenetic genes. Crotonylation (Kcr) is specifically present in male germ cells and marks testis-specific genes in post-meiotic cells, including X-linked genes that escape sex chromosome inactivation in haploid cells. Crotonylation marks active promoters and enhancers and confers resistance to transcriptional repressors. It is also associated with post-meiotically activated genes on autosomes. Post-translationally, lactylated in macrophages by EP300/P300 by using lactoyl-CoA directly derived from endogenous or exogenous lactate, leading to stimulates gene transcription.

The protein resides in the nucleus. Its subcellular location is the chromosome. Its function is as follows. Core component of nucleosome. Nucleosomes wrap and compact DNA into chromatin, limiting DNA accessibility to the cellular machineries which require DNA as a template. Histones thereby play a central role in transcription regulation, DNA repair, DNA replication and chromosomal stability. DNA accessibility is regulated via a complex set of post-translational modifications of histones, also called histone code, and nucleosome remodeling. Has broad antibacterial activity. May contribute to the formation of the functional antimicrobial barrier of the colonic epithelium, and to the bactericidal activity of amniotic fluid. The chain is Histone H2B type 2-E from Homo sapiens (Human).